Here is a 254-residue protein sequence, read N- to C-terminus: MYQPLLLLPLLLTSAFATPHDPTTHQALDKRASFPIPSSKGSVTYSSPKSVSGTFDGGLKTYGRGVKCSGQKEGGDKDAVFILEDGATLKNAIIGADQIEGVHCKGSCTIQNVWWTDVCEDALSLKGSGSGTHRIIGGGARNADDKVIQHNSGGKVTIQDFTVQNFGKLYRACGNCSKQFKRTVEISGVKASSGKSLVGINSNYGDTATISGCASSVKEICVEYEGTDNNDKEPKKKGSGPSNACKYKEPLSKC.

Positions 1 to 17 (MYQPLLLLPLLLTSAFA) are cleaved as a signal peptide. Asn175 is a glycosylation site (N-linked (GlcNAc...) asparagine). Residues 227-254 (TDNNDKEPKKKGSGPSNACKYKEPLSKC) form a disordered region.

This sequence belongs to the polysaccharide lyase 3 family. Ca(2+) serves as cofactor.

It is found in the secreted. The enzyme catalyses Eliminative cleavage of (1-&gt;4)-alpha-D-galacturonan to give oligosaccharides with 4-deoxy-alpha-D-galact-4-enuronosyl groups at their non-reducing ends.. Pectinolytic enzyme consist of four classes of enzymes: pectin lyase, polygalacturonase, pectin methylesterase and rhamnogalacturonase. Among pectinolytic enzymes, pectin lyase is the most important in depolymerization of pectin, since it cleaves internal glycosidic bonds of highly methylated pectins. Favors pectate, the anion, over pectin, the methyl ester. The chain is Probable pectate lyase E (plyE) from Neosartorya fischeri (strain ATCC 1020 / DSM 3700 / CBS 544.65 / FGSC A1164 / JCM 1740 / NRRL 181 / WB 181) (Aspergillus fischerianus).